A 520-amino-acid chain; its full sequence is Cytochrome b5 reductase 4 (520 aa).

At Met1 the chain carries N-acetylmethionine. Positions 1–27 (MLNVPSQAFPAPGSQQRVASQGRSKVP) are disordered. The span at 13–23 (GSQQRVASQGR) shows a compositional bias: polar residues. The Cytochrome b5 heme-binding domain occupies 54–130 (LIEVTEEELK…LKECLVGRMA (77 aa)). Heme is bound by residues His89 and His112. In terms of domain architecture, CS spans 164–255 (PSSPSYDWFQ…KETVSWKCLG (92 aa)). The FAD-binding FR-type domain maps to 272–384 (LYYRQCQLIS…SGPEGNFKVS (113 aa)). FAD contacts are provided by residues 364–379 (DRLQ…GPEG) and 391–423 (DLFL…KVKL).

Belongs to the flavoprotein pyridine nucleotide cytochrome reductase family. FAD serves as cofactor. As to expression, isoform 2 is expressed in testis, brain, skeletal muscle and in the male germline.

It localises to the endoplasmic reticulum. The catalysed reaction is 2 Fe(III)-[cytochrome b5] + NADH = 2 Fe(II)-[cytochrome b5] + NAD(+) + H(+). Functionally, NADH-cytochrome b5 reductase involved in endoplasmic reticulum stress response pathway. Plays a critical role in protecting pancreatic beta-cells against oxidant stress, possibly by protecting the cell from excess buildup of reactive oxygen species (ROS). The protein is Cytochrome b5 reductase 4 (Cyb5r4) of Rattus norvegicus (Rat).